Reading from the N-terminus, the 319-residue chain is Large ribosomal subunit protein uL10 (319 aa).

The span at 286 to 295 (ADSGAAAPSA) shows a compositional bias: low complexity. The segment at 286–319 (ADSGAAAPSAAKEEEKKEEPEEESDGDLGMSLFD) is disordered.

This sequence belongs to the universal ribosomal protein uL10 family. As to quaternary structure, P0 forms a pentameric complex by interaction with dimers of P1 and P2. Interacts with NSF. Phosphorylated. In terms of tissue distribution, highly expressed in stems, inflorescences and immature seeds (at protein level). Expressed in leaves and mature seeds (at protein level).

Its function is as follows. Ribosomal protein P0 is the functional equivalent of E.coli protein L10. The polypeptide is Large ribosomal subunit protein uL10 (Oryza sativa subsp. japonica (Rice)).